Reading from the N-terminus, the 357-residue chain is Alanine racemase (357 aa).

Lys-35 serves as the catalytic Proton acceptor; specific for D-alanine. At Lys-35 the chain carries N6-(pyridoxal phosphate)lysine. Position 128 (Arg-128) interacts with substrate. The Proton acceptor; specific for L-alanine role is filled by Tyr-254. Met-302 provides a ligand contact to substrate.

The protein belongs to the alanine racemase family. The cofactor is pyridoxal 5'-phosphate.

It carries out the reaction L-alanine = D-alanine. It participates in amino-acid biosynthesis; D-alanine biosynthesis; D-alanine from L-alanine: step 1/1. Functionally, catalyzes the interconversion of L-alanine and D-alanine. May also act on other amino acids. This is Alanine racemase (alr) from Marinobacter nauticus (strain ATCC 700491 / DSM 11845 / VT8) (Marinobacter aquaeolei).